A 482-amino-acid polypeptide reads, in one-letter code: Reduced viability upon starvation protein 167 (482 aa).

Ser-2 carries the N-acetylserine modification. In terms of domain architecture, BAR spans Phe-17 to Glu-254. 2 coiled-coil regions span residues Val-31–Leu-64 and Ala-174–Gln-204. Residue Lys-242 forms a Glycyl lysine isopeptide (Lys-Gly) (interchain with G-Cter in ubiquitin) linkage. Ser-299, Ser-321, and Ser-379 each carry phosphoserine; by FUS3 and PHO85. The interval Leu-382 to Ser-407 is disordered. The SH3 domain maps to Pro-421 to Asn-482. Lys-481 participates in a covalent cross-link: Glycyl lysine isopeptide (Lys-Gly) (interchain with G-Cter in ubiquitin).

In terms of assembly, binds to actin. Interacts with ABP1, GYL1, GYP5, PCL2 and YBR108W. Post-translationally, phosphorylated redundantly by cyclin-dependent kinase PHO85 in association with PCL1,2-type cyclins or by MAP kinase FUS3. Phosphorylation inhibits interaction with complexes involved in actin cytoskeleton function.

The protein localises to the cytoplasm. It localises to the cytoskeleton. Component of a cytoskeletal structure that is required for the formation of endocytic vesicles at the plasma membrane level. Could be implicated in cytoskeletal reorganization in response to environmental stresses and could act in the budding site selection mechanism. The sequence is that of Reduced viability upon starvation protein 167 (RVS167) from Saccharomyces cerevisiae (strain ATCC 204508 / S288c) (Baker's yeast).